The primary structure comprises 57 residues: Large ribosomal subunit protein bL32 (57 aa).

It belongs to the bacterial ribosomal protein bL32 family.

The sequence is that of Large ribosomal subunit protein bL32 from Corynebacterium glutamicum (strain R).